The chain runs to 237 residues: Uridylate kinase (237 aa).

9–12 (KLSG) serves as a coordination point for ATP. The segment at 17–22 (GSQGYG) is involved in allosteric activation by GTP. UMP is bound at residue glycine 51. Residues glycine 52 and arginine 56 each coordinate ATP. UMP-binding positions include aspartate 71 and 132-139 (CGNPFFTT). The ATP site is built by threonine 159, tyrosine 165, and aspartate 168.

The protein belongs to the UMP kinase family. Homohexamer.

It localises to the cytoplasm. The enzyme catalyses UMP + ATP = UDP + ADP. The protein operates within pyrimidine metabolism; CTP biosynthesis via de novo pathway; UDP from UMP (UMPK route): step 1/1. Its activity is regulated as follows. Allosterically activated by GTP. Inhibited by UTP. In terms of biological role, catalyzes the reversible phosphorylation of UMP to UDP. The polypeptide is Uridylate kinase (Synechococcus sp. (strain CC9902)).